Reading from the N-terminus, the 353-residue chain is Rhodopsin (353 aa).

The Extracellular segment spans residues 1–36 (MNGTEGDNFYVPFSNKTGLARSPYEYPQYYLAEPWK). N-linked (GlcNAc...) asparagine glycosylation is found at asparagine 2 and asparagine 15. Residues 37–61 (YSALAAYMFFLILVGFPVNFLTLFV) traverse the membrane as a helical segment. Residues 62–73 (TVQHKKLRTPLN) are Cytoplasmic-facing. Residues 74–96 (YILLNLAMANLFMVLFGFTVTMY) form a helical membrane-spanning segment. Topologically, residues 97–110 (TSMNGYFVFGPTMC) are extracellular. Cysteine 110 and cysteine 187 are oxidised to a cystine. The helical transmembrane segment at 111-133 (SIEGFFATLGGEVALWSLVVLAI) threads the bilayer. A 'Ionic lock' involved in activated form stabilization motif is present at residues 134 to 136 (ERY). The Cytoplasmic segment spans residues 134–152 (ERYIVICKPMGNFRFGNTH). Residues 153-173 (AIMGVAFTWIMALACAAPPLV) form a helical membrane-spanning segment. Residues 174–202 (GWSRYIPEGMQCSCGPDYYTLNPNFNNES) lie on the Extracellular side of the membrane. The helical transmembrane segment at 203-224 (YVVYMFVVHFLVPFVIIFFCYG) threads the bilayer. Residues 225 to 252 (RLLCTVKEAAAAQQESASTQKAEKEVTR) lie on the Cytoplasmic side of the membrane. The chain crosses the membrane as a helical span at residues 253 to 274 (MVVLMVIGFLVCWVPYASVAFY). Residues 275–286 (IFTHQGSDFGAT) are Extracellular-facing. Residues 287–308 (FMTLPAFFAKSSALYNPVIYIL) form a helical membrane-spanning segment. N6-(retinylidene)lysine is present on lysine 296. Over 309–353 (MNKQFRNCMITTLCCGKNPLGDDESGASTSKTEVSSVSTSPVSPA) the chain is Cytoplasmic. The interval 330–353 (DDESGASTSKTEVSSVSTSPVSPA) is disordered. Over residues 336 to 353 (STSKTEVSSVSTSPVSPA) the composition is skewed to low complexity.

This sequence belongs to the G-protein coupled receptor 1 family. Opsin subfamily. Phosphorylated on some or all of the serine and threonine residues present in the C-terminal region. Post-translationally, contains one covalently linked retinal chromophore. In terms of tissue distribution, short photoreceptor cells.

The protein localises to the membrane. The protein resides in the cell projection. Its subcellular location is the cilium. It localises to the photoreceptor outer segment. In terms of biological role, photoreceptor required for image-forming vision at low light intensity. While most salt water fish species use retinal as chromophore, most freshwater fish use 3-dehydroretinal, or a mixture of retinal and 3-dehydroretinal. Light-induced isomerization of 11-cis to all-trans retinal triggers a conformational change that activates signaling via G-proteins. Subsequent receptor phosphorylation mediates displacement of the bound G-protein alpha subunit by arrestin and terminates signaling. This Lethenteron camtschaticum (Japanese lamprey) protein is Rhodopsin (RHO).